Consider the following 222-residue polypeptide: Germin-like protein subfamily 1 member 5 (222 aa).

A signal peptide spans 1 to 24 (MKGLLHFLLAKIILLALASSFVYC). Cys-34 and Cys-50 are oxidised to a cystine. Residues Asn-38 and Asn-71 are each glycosylated (N-linked (GlcNAc...) asparagine). The 152-residue stretch at 64–215 (SGLNVPGNTS…AFALDFNKVK (152 aa)) folds into the Cupin type-1 domain. Residues His-112, His-114, and Glu-119 each coordinate Mn(2+). Asn-139 carries an N-linked (GlcNAc...) asparagine glycan. His-163 contributes to the Mn(2+) binding site.

The protein belongs to the germin family. Oligomer (believed to be a pentamer but probably hexamer).

It is found in the secreted. Its subcellular location is the extracellular space. The protein localises to the apoplast. May play a role in plant defense. Probably has no oxalate oxidase activity even if the active site is conserved. This Arabidopsis thaliana (Mouse-ear cress) protein is Germin-like protein subfamily 1 member 5.